Here is a 267-residue protein sequence, read N- to C-terminus: Hydroxyethylthiazole kinase (267 aa).

Methionine 46 is a substrate binding site. Positions 122 and 168 each coordinate ATP. Glycine 195 serves as a coordination point for substrate.

Belongs to the Thz kinase family. Mg(2+) serves as cofactor.

It carries out the reaction 5-(2-hydroxyethyl)-4-methylthiazole + ATP = 4-methyl-5-(2-phosphooxyethyl)-thiazole + ADP + H(+). It functions in the pathway cofactor biosynthesis; thiamine diphosphate biosynthesis; 4-methyl-5-(2-phosphoethyl)-thiazole from 5-(2-hydroxyethyl)-4-methylthiazole: step 1/1. In terms of biological role, catalyzes the phosphorylation of the hydroxyl group of 4-methyl-5-beta-hydroxyethylthiazole (THZ). The polypeptide is Hydroxyethylthiazole kinase (Nitratidesulfovibrio vulgaris (strain ATCC 29579 / DSM 644 / CCUG 34227 / NCIMB 8303 / VKM B-1760 / Hildenborough) (Desulfovibrio vulgaris)).